The following is a 457-amino-acid chain: Na(+)/H(+) antiporter NhaA (457 aa).

The next 11 helical transmembrane spans lie at 33–53 (ASGIVLLSCAVAALALANSPL), 76–96 (FSLAMLVNDGLMTIFFFVVGM), 114–134 (LLPLVAALGGMAVPAAIFLAF), 142–162 (AGWGVPMATDIAFCVGVLTLL), 172–192 (VFVTALAIFDDIGGILVIALF), 196–216 (GLQLTWLAAAGGLTAALALMS), 235–255 (YALHHGGIHATIAGVIAGLAI), 308–328 (FVHALHPWVAFAIMPVFALAN), 349–369 (TALALFAGKLVGIFCCTWIAV), 385–405 (LIGVSAVAGIGFTVALFIAGL), and 419–439 (VGILAGSLVSGVVGALVLRLT).

It belongs to the NhaA Na(+)/H(+) (TC 2.A.33) antiporter family.

The protein resides in the cell inner membrane. It carries out the reaction Na(+)(in) + 2 H(+)(out) = Na(+)(out) + 2 H(+)(in). Na(+)/H(+) antiporter that extrudes sodium in exchange for external protons. This Anaeromyxobacter sp. (strain Fw109-5) protein is Na(+)/H(+) antiporter NhaA.